The sequence spans 247 residues: Small ribosomal subunit protein eS6 (247 aa).

Positions 194–247 (ALKKKRVTKKREDHAEYTKLLAQRMKEAKERKMERKRSNSRSKGDSIRESTSKK) are disordered. A compositionally biased stretch (basic and acidic residues) spans 217 to 247 (RMKEAKERKMERKRSNSRSKGDSIRESTSKK).

Belongs to the eukaryotic ribosomal protein eS6 family. Ribosomal protein S6 is the major substrate of protein kinases in eukaryote ribosomes.

Functionally, component of the 40S small ribosomal subunit. Plays an important role in controlling cell growth and proliferation through the selective translation of particular classes of mRNA. In Aplysia californica (California sea hare), this protein is Small ribosomal subunit protein eS6 (RPS6).